A 386-amino-acid polypeptide reads, in one-letter code: Cobalt-precorrin-5B C(1)-methyltransferase (386 aa).

This sequence belongs to the CbiD family.

The catalysed reaction is Co-precorrin-5B + S-adenosyl-L-methionine = Co-precorrin-6A + S-adenosyl-L-homocysteine. Its pathway is cofactor biosynthesis; adenosylcobalamin biosynthesis; cob(II)yrinate a,c-diamide from sirohydrochlorin (anaerobic route): step 6/10. Catalyzes the methylation of C-1 in cobalt-precorrin-5B to form cobalt-precorrin-6A. In Prochlorococcus marinus (strain MIT 9303), this protein is Cobalt-precorrin-5B C(1)-methyltransferase.